A 176-amino-acid chain; its full sequence is ATP synthase subunit delta (176 aa).

It belongs to the ATPase delta chain family. As to quaternary structure, F-type ATPases have 2 components, F(1) - the catalytic core - and F(0) - the membrane proton channel. F(1) has five subunits: alpha(3), beta(3), gamma(1), delta(1), epsilon(1). F(0) has three main subunits: a(1), b(2) and c(10-14). The alpha and beta chains form an alternating ring which encloses part of the gamma chain. F(1) is attached to F(0) by a central stalk formed by the gamma and epsilon chains, while a peripheral stalk is formed by the delta and b chains.

The protein localises to the cell inner membrane. Functionally, f(1)F(0) ATP synthase produces ATP from ADP in the presence of a proton or sodium gradient. F-type ATPases consist of two structural domains, F(1) containing the extramembraneous catalytic core and F(0) containing the membrane proton channel, linked together by a central stalk and a peripheral stalk. During catalysis, ATP synthesis in the catalytic domain of F(1) is coupled via a rotary mechanism of the central stalk subunits to proton translocation. Its function is as follows. This protein is part of the stalk that links CF(0) to CF(1). It either transmits conformational changes from CF(0) to CF(1) or is implicated in proton conduction. This chain is ATP synthase subunit delta, found in Campylobacter curvus (strain 525.92).